Here is a 400-residue protein sequence, read N- to C-terminus: Na(+)/H(+) antiporter NhaA (400 aa).

12 helical membrane passes run 26 to 46, 71 to 91, 107 to 127, 137 to 157, 166 to 186, 189 to 209, 212 to 232, 233 to 253, 273 to 293, 299 to 319, 340 to 360, and 373 to 393; these read AGGI…NSPL, LIHW…GMEV, IFPA…YWFI, GWAI…ALLS, IFLL…IALF, HGLS…LILL, FKVS…ASVL, KSGV…PLKG, FVIL…GIDV, PLLL…IFGF, IFAV…LASL, and LSRL…YLFL.

This sequence belongs to the NhaA Na(+)/H(+) (TC 2.A.33) antiporter family.

The protein resides in the cell inner membrane. The enzyme catalyses Na(+)(in) + 2 H(+)(out) = Na(+)(out) + 2 H(+)(in). Na(+)/H(+) antiporter that extrudes sodium in exchange for external protons. The chain is Na(+)/H(+) antiporter NhaA from Haemophilus influenzae (strain PittGG).